The sequence spans 252 residues: Probable ABC transporter ATP-binding protein p29 (252 aa).

One can recognise an ABC transporter domain in the interval 8 to 252 (LEIKNLTFKN…NILDQVFKND (245 aa)). 42–49 (GSSGQGKS) provides a ligand contact to ATP.

Belongs to the ABC transporter superfamily.

In terms of biological role, part of a high-affinity transport system. The protein is Probable ABC transporter ATP-binding protein p29 of Mesomycoplasma hyorhinis (Mycoplasma hyorhinis).